Here is a 181-residue protein sequence, read N- to C-terminus: Protein GrpE (181 aa).

The span at 1–24 shows a compositional bias: acidic residues; it reads MSEENIGENEVETPETEPSAEAEV. The disordered stretch occupies residues 1–26; the sequence is MSEENIGENEVETPETEPSAEAEVES.

It belongs to the GrpE family. In terms of assembly, homodimer.

Its subcellular location is the cytoplasm. Functionally, participates actively in the response to hyperosmotic and heat shock by preventing the aggregation of stress-denatured proteins, in association with DnaK and GrpE. It is the nucleotide exchange factor for DnaK and may function as a thermosensor. Unfolded proteins bind initially to DnaJ; upon interaction with the DnaJ-bound protein, DnaK hydrolyzes its bound ATP, resulting in the formation of a stable complex. GrpE releases ADP from DnaK; ATP binding to DnaK triggers the release of the substrate protein, thus completing the reaction cycle. Several rounds of ATP-dependent interactions between DnaJ, DnaK and GrpE are required for fully efficient folding. The polypeptide is Protein GrpE (Rhizorhabdus wittichii (strain DSM 6014 / CCUG 31198 / JCM 15750 / NBRC 105917 / EY 4224 / RW1) (Sphingomonas wittichii)).